The primary structure comprises 220 residues: GTP cyclohydrolase 1 (220 aa).

3 residues coordinate Zn(2+): Cys-113, His-116, and Cys-184.

Belongs to the GTP cyclohydrolase I family. As to quaternary structure, homomer.

It catalyses the reaction GTP + H2O = 7,8-dihydroneopterin 3'-triphosphate + formate + H(+). It participates in cofactor biosynthesis; 7,8-dihydroneopterin triphosphate biosynthesis; 7,8-dihydroneopterin triphosphate from GTP: step 1/1. The protein is GTP cyclohydrolase 1 of Hamiltonella defensa subsp. Acyrthosiphon pisum (strain 5AT).